A 219-amino-acid chain; its full sequence is Octanoyltransferase (219 aa).

Residues 34 to 209 enclose the BPL/LPL catalytic domain; sequence SESPDELWIV…TFSQLLGYQH (176 aa). Substrate-binding positions include 73–80, 140–142, and 153–155; these read RGGQVTYH, SLG, and GLA. Residue cysteine 171 is the Acyl-thioester intermediate of the active site.

It belongs to the LipB family.

It localises to the cytoplasm. It carries out the reaction octanoyl-[ACP] + L-lysyl-[protein] = N(6)-octanoyl-L-lysyl-[protein] + holo-[ACP] + H(+). It participates in protein modification; protein lipoylation via endogenous pathway; protein N(6)-(lipoyl)lysine from octanoyl-[acyl-carrier-protein]: step 1/2. In terms of biological role, catalyzes the transfer of endogenously produced octanoic acid from octanoyl-acyl-carrier-protein onto the lipoyl domains of lipoate-dependent enzymes. Lipoyl-ACP can also act as a substrate although octanoyl-ACP is likely to be the physiological substrate. This chain is Octanoyltransferase, found in Shewanella putrefaciens (strain CN-32 / ATCC BAA-453).